Here is a 275-residue protein sequence, read N- to C-terminus: Large ribosomal subunit protein uL2 (275 aa).

The segment covering 28–38 (EPYAPLLDKKS) has biased composition (basic and acidic residues). Disordered regions lie at residues 28-55 (EPYA…RHVG) and 224-258 (AMNP…GYKT).

Belongs to the universal ribosomal protein uL2 family. In terms of assembly, part of the 50S ribosomal subunit. Forms a bridge to the 30S subunit in the 70S ribosome.

In terms of biological role, one of the primary rRNA binding proteins. Required for association of the 30S and 50S subunits to form the 70S ribosome, for tRNA binding and peptide bond formation. It has been suggested to have peptidyltransferase activity; this is somewhat controversial. Makes several contacts with the 16S rRNA in the 70S ribosome. The protein is Large ribosomal subunit protein uL2 of Cellvibrio japonicus (strain Ueda107) (Pseudomonas fluorescens subsp. cellulosa).